The primary structure comprises 391 residues: 5-amino-6-(D-ribitylamino)uracil--L-tyrosine 4-hydroxyphenyl transferase (391 aa).

The Radical SAM core domain maps to 55–302 (VTYVINRNIN…GAVARIYLGN (248 aa)). Positions 69, 73, and 76 each coordinate [4Fe-4S] cluster.

Belongs to the radical SAM superfamily. CofH family. As to quaternary structure, consists of two subunits, CofG and CofH. [4Fe-4S] cluster is required as a cofactor.

It carries out the reaction 5-amino-6-(D-ribitylamino)uracil + L-tyrosine + S-adenosyl-L-methionine = 5-amino-5-(4-hydroxybenzyl)-6-(D-ribitylimino)-5,6-dihydrouracil + 2-iminoacetate + 5'-deoxyadenosine + L-methionine + H(+). Its pathway is cofactor biosynthesis; coenzyme F0 biosynthesis. Its function is as follows. Catalyzes the radical-mediated synthesis of 5-amino-5-(4-hydroxybenzyl)-6-(D-ribitylimino)-5,6-dihydrouracil from 5-amino-6-(D-ribitylamino)uracil and L-tyrosine. In Trichormus variabilis (strain ATCC 29413 / PCC 7937) (Anabaena variabilis), this protein is 5-amino-6-(D-ribitylamino)uracil--L-tyrosine 4-hydroxyphenyl transferase.